We begin with the raw amino-acid sequence, 357 residues long: Protein BMRF2 (357 aa).

The Virion surface segment spans residues 1–11 (MFSCKQHLSLG). The hydrophobic stretch at 12 to 32 (ACVFCLGLLASTPFIWCFVFA) threads the membrane. Residues 33 to 46 (NLLSLEIFSPWQTH) lie on the Virion surface side of the membrane. Over 47-67 (VYRLGFPTACLMAVLWTLVPA) the chain traverses the membrane. Topologically, residues 68–70 (KHA) are virion surface. A transmembrane helix spans residues 71–91 (VRAVTPAIMLNIASALIFFSL). The Virion surface segment spans residues 92–98 (RVYSTST). The hydrophobic stretch at 99-121 (WVSAPCLFLANLPLLCLWPRLAI) threads the membrane. Residues 122–133 (EIVYICPAIHQR) lie on the Virion surface side of the membrane. The chain crosses the lipid bilayer at residues 134–154 (FFELGLLLACTIFALSVVSRA). Over 155-158 (LEVS) the chain is Virion surface. A membrane pass occupies residues 159–179 (AVFMSPFFIFLALGSGSLAGA). The Virion surface segment spans residues 180–217 (RRNQIYTSGLERRRSIFCARGDHSVASLKETLHKCPWD). The Integrin binding site motif lies at 199–201 (RGD). The hydrophobic stretch at 218–238 (LLAISALTVLVVCVMIVLHVH) threads the membrane. At 239 to 240 (AE) the chain is on the virion surface side. The hydrophobic stretch at 241–261 (VFFGLSRYLPLFLCGAMASGG) threads the membrane. Over 262 to 267 (LYLGHS) the chain is Virion surface. A transmembrane helix spans residues 268–288 (SIIACVMATLCTLTSVVVYFL). Over 289–298 (HETLGPLGKT) the chain is Virion surface. At 299 to 319 (VLFISIFVYYFSGVAALSAAM) the chain is embedded in the membrane. The Virion surface segment spans residues 320 to 335 (RYKLKKFVNGPLVHLR). The hydrophobic stretch at 336–356 (VVYMCCFVFTFCEYLLVTFIK) threads the membrane. Residue S357 is a topological domain, virion surface.

This sequence belongs to the herpesviridae BMRF2 family. As to quaternary structure, interacts with BDLF2. Interacts with host beta1 integrin family. Extensively glycosylated by O-linked oligosaccharides.

It localises to the virion membrane. Its subcellular location is the host cell membrane. In terms of biological role, facilitates virus attachment to oral epithelial cells by binding to host beta1 integrin family. Participates in rearrangement of cellular actin to increase intercellular contacts by binding BDLF2 and thereby promote virus cell-to-cell spreading. The sequence is that of Protein BMRF2 from Homo sapiens (Human).